Reading from the N-terminus, the 418-residue chain is Queuine tRNA-ribosyltransferase accessory subunit 2 (418 aa).

Zn(2+) contacts are provided by cysteine 325, cysteine 327, cysteine 330, and histidine 356.

This sequence belongs to the queuine tRNA-ribosyltransferase family. QTRT2 subfamily. Heterodimer of a catalytic subunit and an accessory subunit. It depends on Zn(2+) as a cofactor.

It localises to the cytoplasm. Its function is as follows. Non-catalytic subunit of the queuine tRNA-ribosyltransferase (TGT) that catalyzes the base-exchange of a guanine (G) residue with queuine (Q) at position 34 (anticodon wobble position) in tRNAs with GU(N) anticodons (tRNA-Asp, -Asn, -His and -Tyr), resulting in the hypermodified nucleoside queuosine (7-(((4,5-cis-dihydroxy-2-cyclopenten-1-yl)amino)methyl)-7-deazaguanosine). The protein is Queuine tRNA-ribosyltransferase accessory subunit 2 of Drosophila melanogaster (Fruit fly).